Reading from the N-terminus, the 537-residue chain is Probable protein kinase UbiB (537 aa).

Residues 30–47 (LLPWWLRALGYLLPWRWL) form a helical membrane-spanning segment. Positions 126–490 (RFDSEPLASA…KRERHDHHLL (365 aa)) constitute a Protein kinase domain. ATP contacts are provided by residues 132–140 (LASASVAQV) and Lys-154. Residue Asp-289 is the Proton acceptor of the active site. 2 consecutive transmembrane segments (helical) span residues 489–507 (LLRLLGAALLAGGVLLALQ) and 513–530 (ANAWPSWLMLASGLYLLV).

The protein belongs to the ABC1 family. UbiB subfamily.

It localises to the cell inner membrane. It participates in cofactor biosynthesis; ubiquinone biosynthesis [regulation]. Its function is as follows. Is probably a protein kinase regulator of UbiI activity which is involved in aerobic coenzyme Q (ubiquinone) biosynthesis. The chain is Probable protein kinase UbiB from Azotobacter vinelandii (strain DJ / ATCC BAA-1303).